A 118-amino-acid polypeptide reads, in one-letter code: MNTYAFNRELRLLTPEHYQNVFQQAHRAGSPHFTIIARNNKLSHPRLGLAVPKKQIKTAVGRNRFKRLARESFRNSQHQLPNKDFVVIAKKSAQDLSNEEIFKLFDKLWQRLSRPSRG.

This sequence belongs to the RnpA family. In terms of assembly, consists of a catalytic RNA component (M1 or rnpB) and a protein subunit.

The enzyme catalyses Endonucleolytic cleavage of RNA, removing 5'-extranucleotides from tRNA precursor.. Its function is as follows. RNaseP catalyzes the removal of the 5'-leader sequence from pre-tRNA to produce the mature 5'-terminus. It can also cleave other RNA substrates such as 4.5S RNA. The protein component plays an auxiliary but essential role in vivo by binding to the 5'-leader sequence and broadening the substrate specificity of the ribozyme. This chain is Ribonuclease P protein component, found in Vibrio parahaemolyticus serotype O3:K6 (strain RIMD 2210633).